The following is a 190-amino-acid chain: RNA pyrophosphohydrolase (190 aa).

The region spanning 6–149 is the Nudix hydrolase domain; that stretch reads GYRPNVGIVL…KRSVYARALC (144 aa). The Nudix box motif lies at 38 to 59; sequence GGMHSDETPVEAMYRELNEETG.

This sequence belongs to the Nudix hydrolase family. RppH subfamily. It depends on a divalent metal cation as a cofactor.

Functionally, accelerates the degradation of transcripts by removing pyrophosphate from the 5'-end of triphosphorylated RNA, leading to a more labile monophosphorylated state that can stimulate subsequent ribonuclease cleavage. In Xylella fastidiosa (strain Temecula1 / ATCC 700964), this protein is RNA pyrophosphohydrolase.